A 280-amino-acid chain; its full sequence is Ribosomal protein L11 methyltransferase (280 aa).

S-adenosyl-L-methionine is bound by residues T131, G152, D174, and N217.

Belongs to the methyltransferase superfamily. PrmA family.

Its subcellular location is the cytoplasm. It catalyses the reaction L-lysyl-[protein] + 3 S-adenosyl-L-methionine = N(6),N(6),N(6)-trimethyl-L-lysyl-[protein] + 3 S-adenosyl-L-homocysteine + 3 H(+). Its function is as follows. Methylates ribosomal protein L11. The polypeptide is Ribosomal protein L11 methyltransferase (Bacteroides fragilis (strain ATCC 25285 / DSM 2151 / CCUG 4856 / JCM 11019 / LMG 10263 / NCTC 9343 / Onslow / VPI 2553 / EN-2)).